We begin with the raw amino-acid sequence, 350 residues long: Ribosomal RNA large subunit methyltransferase M (350 aa).

S-adenosyl-L-methionine-binding positions include 217–220, aspartate 236, aspartate 256, and aspartate 272; that span reads APGG. The Proton acceptor role is filled by lysine 301.

The protein belongs to the class I-like SAM-binding methyltransferase superfamily. RNA methyltransferase RlmE family. RlmM subfamily. Monomer.

The protein localises to the cytoplasm. The catalysed reaction is cytidine(2498) in 23S rRNA + S-adenosyl-L-methionine = 2'-O-methylcytidine(2498) in 23S rRNA + S-adenosyl-L-homocysteine + H(+). Functionally, catalyzes the 2'-O-methylation at nucleotide C2498 in 23S rRNA. The sequence is that of Ribosomal RNA large subunit methyltransferase M from Teredinibacter turnerae (strain ATCC 39867 / T7901).